We begin with the raw amino-acid sequence, 70 residues long: Testis-expressed protein 53 (70 aa).

As to expression, expressed in Testis.

This Homo sapiens (Human) protein is Testis-expressed protein 53.